The primary structure comprises 295 residues: Manganese transport system membrane protein MntD (295 aa).

A run of 9 helical transmembrane segments spans residues 7 to 27, 42 to 62, 63 to 83, 87 to 107, 138 to 158, 174 to 194, 203 to 223, 227 to 247, and 253 to 273; these read IIAT…FLVL, LLGI…YMFI, GAAA…SKGV, AAIG…LSVY, IGPK…VLIS, ALAL…MLSL, VGAV…HLLT, LYML…GYFF, and VSIS…AFLF.

This sequence belongs to the ABC-3 integral membrane protein family. As to quaternary structure, the complex is probably composed of two ATP-binding proteins (MntB), two transmembrane proteins (MntC and MntD) and a solute-binding protein (MntA).

The protein localises to the cell membrane. Functionally, probably part of the ABC transporter complex MntABCD involved in manganese import. Probably responsible for the translocation of the substrate across the membrane. In Bacillus subtilis (strain 168), this protein is Manganese transport system membrane protein MntD.